Here is a 74-residue protein sequence, read N- to C-terminus: Cyclin-dependent kinases regulatory subunit (74 aa).

This sequence belongs to the CKS family. Forms a homohexamer that can probably bind six kinase subunits.

Binds to the catalytic subunit of the cyclin dependent kinases Cdk1 and Cdk2, and is essential for their biological function. The polypeptide is Cyclin-dependent kinases regulatory subunit (Cks30A) (Drosophila melanogaster (Fruit fly)).